A 251-amino-acid polypeptide reads, in one-letter code: Metallo-beta-lactamase domain-containing protein 1 (251 aa).

Positions 118, 120, 122, 123, 173, 196, and 235 each coordinate Zn(2+).

This sequence belongs to the metallo-beta-lactamase superfamily. Glyoxalase II family. In terms of assembly, homodimer. It depends on Zn(2+) as a cofactor.

It is found in the cytoplasm. The protein localises to the cytosol. It localises to the nucleus. It catalyses the reaction a ribonucleotidyl-ribonucleotide-RNA + H2O = a 3'-end ribonucleotide-RNA + a 5'-end 5'-phospho-ribonucleoside-RNA + H(+). Its function is as follows. Endoribonuclease that catalyzes the hydrolysis of histone-coding pre-mRNA 3'-end. Involved in histone pre-mRNA processing during the S-phase of the cell cycle, which is required for entering/progressing through S-phase. Cleaves histone pre-mRNA at a major and a minor cleavage site after the 5'-ACCCA-3' and the 5'-ACCCACA-3' sequence, respectively, and located downstream of the stem-loop. May require the presence of the HDE element located at the histone pre-RNA 3'-end to avoid non-specific cleavage. The sequence is that of Metallo-beta-lactamase domain-containing protein 1 (Mblac1) from Rattus norvegicus (Rat).